Here is a 400-residue protein sequence, read N- to C-terminus: DNA polymerase IV (400 aa).

The UmuC domain occupies 8-191; sequence ILLCDANSFF…LPVRELFGIG (184 aa). Mg(2+)-binding residues include Asp-12 and Asp-109. Glu-110 is a catalytic residue.

It belongs to the DNA polymerase type-Y family. Monomer. The cofactor is Mg(2+).

The protein resides in the cytoplasm. It carries out the reaction DNA(n) + a 2'-deoxyribonucleoside 5'-triphosphate = DNA(n+1) + diphosphate. Functionally, poorly processive, error-prone DNA polymerase involved in untargeted mutagenesis. Copies undamaged DNA at stalled replication forks, which arise in vivo from mismatched or misaligned primer ends. These misaligned primers can be extended by PolIV. Exhibits no 3'-5' exonuclease (proofreading) activity. May be involved in translesional synthesis, in conjunction with the beta clamp from PolIII. The protein is DNA polymerase IV of Moorella thermoacetica (strain ATCC 39073 / JCM 9320).